The primary structure comprises 478 residues: MSGHKCYSWELQDRFAQDKSVVNKMQQKYWETKQAFIKATGKKEDEHVVASDADLDAKLELFHSIQRTCLDLSKAIVLYQKRICFLSQEENELGKFLRSQGFQDKTRAGKMMQATGKALCFSSQQRLALRNPLCRFHQEVETFRHRAISDTWLTVNRMEQYRTEYRGALLWMKDVSQELDPDLYKQMEKFRKVQTQVRLAKKNFDKLKMDVCQKVDLLGASRCNLLSHMLATYQTTLLHFWEKTSHTMAAIHESFKGYQPYEFTTLKSLQDPMKKLVEKEGKKTSWRENREAVAPEPRQLISLEDEHKDSSAYKTEEGTSVLSSVDKGSVHDTCSGPIDELLDGKPEEACLGPTAGTPEPESGDKDDLLLLNEIFSTSCLDEGEFSREWAAVFGDDQLKEPAPMGAQGEPDPKPQIGSGFLPSQLLDQNMKDLQASLQEPAKAASDLTAWFSLFADLDPLSNPDAVGKTDKEHELLNA.

The 204-residue stretch at 50-253 folds into the AH domain; it reads ASDADLDAKL…TSHTMAAIHE (204 aa). The span at 306–317 shows a compositional bias: basic and acidic residues; that stretch reads EHKDSSAYKTEE. Disordered regions lie at residues 306 to 365 and 398 to 422; these read EHKD…SGDK and LKEP…GFLP.

As to expression, predominantly expressed in brain, pancreas and stomach mucosa. High expression also found in stomach muscle and testis.

It is found in the cytoplasm. The protein localises to the cytosol. The protein resides in the golgi apparatus membrane. It localises to the cytoplasmic vesicle. Its subcellular location is the secretory vesicle membrane. It is found in the secretory vesicle. The protein localises to the synaptic vesicle membrane. Its function is as follows. May play a role in neurotransmitter secretion. This Mus musculus (Mouse) protein is Islet cell autoantigen 1.